Here is a 147-residue protein sequence, read N- to C-terminus: Phospholipase A2 inhibitor subunit A (147 aa).

Residues 62–143 (EICRQAGGRI…DDNLLVVCEF (82 aa)) enclose the C-type lectin domain. Intrachain disulfides connect cysteine 64–cysteine 141 and cysteine 119–cysteine 133. N-linked (GlcNAc...) asparagine glycosylation occurs at asparagine 103.

Belongs to the alpha-type phospholipase A2 inhibitor family. Homotrimer; non-covalently linked. In terms of processing, glycosylated. As to expression, expressed by the liver.

Its subcellular location is the secreted. In terms of biological role, inhibits the enzymatic activity of the acidic phospholipase A2 (PLA2). This is Phospholipase A2 inhibitor subunit A from Gloydius brevicaudus siniticus (Chinese mamushi).